We begin with the raw amino-acid sequence, 64 residues long: Prokaryotic ubiquitin-like protein Pup (64 aa).

Residues 1–37 form a disordered region; it reads MAQEQTKRGGGGGDDEDVTGTTAAGQERREKLAQDTD. Positions 21–58 are ARC ATPase binding; that stretch reads TTAAGQERREKLAQDTDDLLDEIDDVLEENAEDFVRAY. A coiled-coil region spans residues 25 to 52; it reads GQERREKLAQDTDDLLDEIDDVLEENAE. Position 64 is a deamidated glutamine (Gln-64). An Isoglutamyl lysine isopeptide (Gln-Lys) (interchain with K-? in acceptor proteins) cross-link involves residue Gln-64.

Belongs to the prokaryotic ubiquitin-like protein family. In terms of assembly, strongly interacts with the proteasome-associated ATPase ARC through a hydrophobic interface; the interacting region of Pup lies in its C-terminal half. There is one Pup binding site per ARC hexamer ring. Post-translationally, is modified by deamidation of its C-terminal glutamine to glutamate by the deamidase Dop, a prerequisite to the subsequent pupylation process.

Its pathway is protein degradation; proteasomal Pup-dependent pathway. Protein modifier that is covalently attached to lysine residues of substrate proteins, thereby targeting them for proteasomal degradation. The tagging system is termed pupylation. In Mycobacterium marinum (strain ATCC BAA-535 / M), this protein is Prokaryotic ubiquitin-like protein Pup.